Reading from the N-terminus, the 169-residue chain is Inorganic pyrophosphatase (169 aa).

Residues Lys-20, Arg-34, and Tyr-46 each coordinate substrate. 3 residues coordinate Mg(2+): Asp-56, Asp-61, and Asp-93. Tyr-130 is a binding site for substrate.

The protein belongs to the PPase family. In terms of assembly, homohexamer. Requires Mg(2+) as cofactor.

It is found in the cytoplasm. It carries out the reaction diphosphate + H2O = 2 phosphate + H(+). Functionally, catalyzes the hydrolysis of inorganic pyrophosphate (PPi) forming two phosphate ions. This is Inorganic pyrophosphatase from Methanosarcina mazei (strain ATCC BAA-159 / DSM 3647 / Goe1 / Go1 / JCM 11833 / OCM 88) (Methanosarcina frisia).